We begin with the raw amino-acid sequence, 100 residues long: Small ribosomal subunit protein uS14c (100 aa).

It belongs to the universal ribosomal protein uS14 family. In terms of assembly, part of the 30S ribosomal subunit.

Its subcellular location is the plastid. The protein resides in the chloroplast. Functionally, binds 16S rRNA, required for the assembly of 30S particles. The sequence is that of Small ribosomal subunit protein uS14c from Chaetosphaeridium globosum (Charophycean green alga).